The sequence spans 248 residues: Triosephosphate isomerase (248 aa).

9 to 11 (NWK) contributes to the substrate binding site. H94 serves as the catalytic Electrophile. The Proton acceptor role is filled by E166. Substrate is bound by residues G172, S212, and 233–234 (GG).

Belongs to the triosephosphate isomerase family. As to quaternary structure, homodimer.

The protein resides in the cytoplasm. It catalyses the reaction D-glyceraldehyde 3-phosphate = dihydroxyacetone phosphate. It participates in carbohydrate biosynthesis; gluconeogenesis. The protein operates within carbohydrate degradation; glycolysis; D-glyceraldehyde 3-phosphate from glycerone phosphate: step 1/1. In terms of biological role, involved in the gluconeogenesis. Catalyzes stereospecifically the conversion of dihydroxyacetone phosphate (DHAP) to D-glyceraldehyde-3-phosphate (G3P). The polypeptide is Triosephosphate isomerase (Alkaliphilus metalliredigens (strain QYMF)).